We begin with the raw amino-acid sequence, 217 residues long: Snake venom metalloproteinase lebetase-4 (217 aa).

Positions 1 to 14 (SCRKKASQLNLTPE) are excised as a propeptide. At Gln15 the chain carries Pyrrolidone carboxylic acid. One can recognise a Peptidase M12B domain in the interval 21 to 217 (RYIELVIVAD…HNPQCILNQP (197 aa)). Residues Glu24 and Asp108 each coordinate Ca(2+). 3 disulfides stabilise this stretch: Cys132–Cys212, Cys172–Cys196, and Cys174–Cys179. His157 is a Zn(2+) binding site. Glu158 is a catalytic residue. Positions 161 and 167 each coordinate Zn(2+). Cys212 and Asn215 together coordinate Ca(2+).

It belongs to the venom metalloproteinase (M12B) family. P-I subfamily. Monomer. Zn(2+) is required as a cofactor. In terms of tissue distribution, expressed by the venom gland.

The protein localises to the secreted. Fibrinolytic and caseinolytic activities are inhibited by Cd(2+), Cu(2+) and Co(2+) ions. Not inhibited by Mg(2+), Ca(2+) and Ba(2+). Also inhibited by EDTA, EGTA and 1,10-phenanthroline. Functionally, snake venom zinc metalloprotease that hydrolyzes the Aalpha-chain and more slowly the Bbeta-chain of fibrin and fibrinogen. Also hydrolyzes casein and B-chain of oxidized insulin. Its fibrinolytic activity is direct, without any plasminogen activation. Inhibits ADP-induced and collagen-induced platelet aggregation. Shows low hemorrhagic activity. Cleaves the plasma proteinase inhibitors alpha(2)-macroglobulin (A2M) and alpha(2)M-related pregnancy zone protein (PZP), and is inhibited by them. The chain is Snake venom metalloproteinase lebetase-4 from Macrovipera lebetinus (Levantine viper).